The primary structure comprises 4473 residues: Plectin (4473 aa).

2 Calponin-homology (CH) domains span residues 1-74 (DGHN…LHFQ) and 87-192 (MTAK…DAMP). The tract at residues 1-192 (DGHNLISLLE…YVSSLYDAMP (192 aa)) is actin-binding. The interval 1–1259 (DGHNLISLLE…SELTTLTSQY (1259 aa)) is globular 1. The Spectrin 1 repeat unit spans residues 449–508 (RYLQDLLAWVEENQRRIDSAEWGVDLPSVEAQLGSHRGMHQSIEEFRAKIERARNDESQL). Residue serine 509 is modified to Phosphoserine. 2 Spectrin repeats span residues 529-613 (KLLN…REDH) and 626-719 (LQTQ…AIVQ). Threonine 604 carries the phosphothreonine modification. In terms of domain architecture, SH3 spans 730–787 (RGHVPLMAVCDYKQVEVTVHKGDQCQLVGPAQPSHWKVLRGPSSEAAVPSVCFLVPPP). Phosphoserine is present on serine 836. A Spectrin 4 repeat occupies 1104 to 1204 (RERVNQLLER…QKFAKQYINA (101 aa)). Serine 1224 carries the phosphoserine modification. Residues 1258-2548 (QYIKFISETL…EEIAATQAAA (1291 aa)) adopt a coiled-coil conformation. The central fibrous rod domain stretch occupies residues 1260–2544 (IKFISETLRR…LAHSEEIAAT (1285 aa)). Disordered stretches follow at residues 1274–1293 (ERLA…EGEA) and 1407–1434 (RAEE…DESQ). A Phosphoserine modification is found at serine 1510. Residue lysine 1514 is modified to N6-acetyllysine. 5 disordered regions span residues 1529–1550 (VTQL…ERAR), 1582–1616 (SLAQ…RELA), 1881–1929 (AEDT…AARQ), 1950–1971 (LRER…AAQK), and 2003–2098 (ERLR…KHKK). Composition is skewed to basic and acidic residues over residues 1587–1616 (DAEK…RELA), 1881–1897 (AEDT…EAAR), and 1905–1917 (EEQR…ERVQ). The segment covering 1959-1968 (ARQLQLAQEA) has biased composition (low complexity). Positions 2003-2047 (ERLRGEAEAARRAAEEAEEAREQAEREAAQSRKQVEEAERLKQSA) are enriched in basic and acidic residues. Over residues 2048–2061 (EEQAQARAQAQAAA) the composition is skewed to low complexity. Positions 2062 to 2077 (EKLRKEAEQEAARRAQ) are enriched in basic and acidic residues. Serine 2420 is subject to Phosphoserine. Lysine 2425 carries the post-translational modification N6-acetyllysine. The disordered stretch occupies residues 2457-2476 (REEQQRQQRQMEQEKQELVA). The tract at residues 2545–4473 (QAAAAKALPN…SLGGPESAVA (1929 aa)) is globular 2. Serine 2563 and serine 2591 each carry phosphoserine. Plectin repeat units lie at residues 2615–2652 (RQYL…PGTA), 2653–2690 (LILL…PELH), 2691–2728 (HKLL…RDHA), 2729–2766 (IRLL…EEMS), and 2770–2804 (ADPG…PETG). Threonine 2675 is modified (phosphothreonine). Tyrosine 2822 is subject to Phosphotyrosine. N6-acetyllysine occurs at positions 2842 and 2880. Plectin repeat units lie at residues 2905 to 2942 (ALVP…ADSV), 2943 to 2980 (RRAL…PDVA), 2981 to 3018 (VALL…PELH), 3019 to 3056 (EKLL…REQG), and 3057 to 3094 (LRLL…KETN). Residue tyrosine 3151 is modified to Phosphotyrosine. At lysine 3209 the chain carries N6-acetyllysine. Plectin repeat units lie at residues 3274 to 3311 (RTLL…PSTA), 3312 to 3349 (TLLL…PELH), 3350 to 3387 (EKLL…REHA), 3388 to 3425 (IRLL…EEMS), and 3429 to 3463 (ADPS…PETG). Threonine 3574 carries the phosphothreonine modification. Residue tyrosine 3579 is modified to Phosphotyrosine. 6 Plectin repeats span residues 3609–3646 (WRYL…AEVA), 3647–3684 (RLLL…PELH), 3685–3722 (DRLL…AEEA), 3723–3760 (LRLL…KDTH), 3764–3797 (SEPS…DGSG), and 3800–3834 (LLPL…EATA). A Phosphothreonine modification is found at threonine 3819. Position 3843 is a phosphoserine (serine 3843). Plectin repeat units follow at residues 3852–3889 (QKFL…PGTA), 3890–3927 (FELL…PEFK), 3928–3965 (DRLL…KDHG), 3966–4003 (IRLL…EEMN), 4007–4041 (TDPS…PQTG), and 4043–4094 (RLLP…HQTY). The interval 4039–4089 (QTGLRLLPLKEKKRERKTSSKSSVRKRRVVIVDPETSKEMSVYEAYRKGLI) is binding to intermediate filaments. Serine 4171, serine 4173, serine 4174, serine 4175, serine 4178, serine 4179, serine 4180, and serine 4181 each carry phosphoserine. Tyrosine 4182 carries the post-translational modification Phosphotyrosine. Phosphoserine is present on residues serine 4185, serine 4189, and serine 4195. Plectin repeat units lie at residues 4197 to 4234 (SDPT…NITG), 4235 to 4272 (QRLL…KIMV), 4273 to 4310 (DRIN…YEAG), 4311 to 4348 (QRFL…ARTA), and 4349 to 4386 (QKLR…EGTG). Residue threonine 4200 is modified to Phosphothreonine. Residue threonine 4328 is modified to Phosphothreonine; by CDK1. Phosphoserine occurs at positions 4396 and 4402. A compositionally biased stretch (low complexity) spans 4400 to 4460 (YYSPYSVSGS…SGYGRRYASG (61 aa)). The interval 4400–4473 (YYSPYSVSGS…SLGGPESAVA (74 aa)) is disordered. The residue at position 4404 (tyrosine 4404) is a Phosphotyrosine. Phosphoserine occurs at positions 4405, 4407, and 4411. Position 4412 is a phosphothreonine (threonine 4412). The interval 4414–4429 (GSRTGSRTGSRAGSRR) is 4 X 4 AA tandem repeats of G-S-R-X. Phosphoserine is present on serine 4415. Omega-N-methylarginine is present on residues arginine 4416 and arginine 4429. Residues serine 4431 and serine 4464 each carry the phosphoserine modification.

This sequence belongs to the plakin or cytolinker family. Homodimer or homotetramer. Interacts (via actin-binding domain) with SYNE3. Interacts (via calponin-homology (CH) 1 domain) with VIM (via rod region). Interacts (via N-terminus) with DST isoform 2 (via N-terminus). Interacts with FER. Interacts with TOR1A. Interacts with ANK3. Identified in complexes that contain VIM, EZR, AHNAK, BFSP1, BFSP2, ANK2, PLEC, PRX and spectrin. Phosphorylated by CDK1; regulates dissociation from intermediate filaments during mitosis.

The protein localises to the cytoplasm. It is found in the cytoskeleton. The protein resides in the cell junction. Its subcellular location is the hemidesmosome. It localises to the cell projection. The protein localises to the podosome. Interlinks intermediate filaments with microtubules and microfilaments and anchors intermediate filaments to desmosomes or hemidesmosomes. May be involved not only in the cross-linking and stabilization of cytoskeletal intermediate filaments network, but also in the regulation of their dynamics. This is Plectin (PLEC) from Cricetulus griseus (Chinese hamster).